A 916-amino-acid polypeptide reads, in one-letter code: Major intrinsically disordered Notch2-binding receptor 1 (916 aa).

Over 1–891 (METSQETSLF…AEFRRAKVCK (891 aa)) the chain is Cytoplasmic. Disordered regions lie at residues 390 to 409 (EEKL…PAPE), 553 to 591 (KSDC…SEEE), 648 to 675 (SLTS…GPKL), 705 to 726 (TRPS…IASI), and 745 to 782 (NEEE…LPKQ). 2 stretches are compositionally biased toward basic and acidic residues: residues 553 to 564 (KSDCDSSPEHNL) and 575 to 591 (KGDK…SEEE). S711 carries the post-translational modification Phosphoserine. The segment covering 750 to 771 (KDTGPGDNKDWHRKSKEADRQY) has biased composition (basic and acidic residues). Residues 892–912 (IAALIAAAACTVILVIVVPIC) traverse the membrane as a helical segment. Topologically, residues 913–916 (TMKS) are extracellular.

The protein belongs to the MINAR family. In terms of assembly, interacts with NOTCH2; this interaction increases MINAR1 stability. Interacts (via N-terminus) with DEPTOR (via PDZ domain); this interaction may stabilize DEPTOR protein by impairing its ubiquitination. As to expression, widely expressed, including in breast epithelial cells and endothelial cells (at protein level). Expression is down-regulated in advanced breast tumors (at protein level).

The protein localises to the cell membrane. Functionally, intrinsically disordered protein which may negatively regulate mTOR signaling pathway by stabilizing the mTOR complex component DEPTOR. Negatively regulates angiogenesis. Negatively regulates cell growth. Negatively regulates neurite outgrowth in hippocampal neurons. This Homo sapiens (Human) protein is Major intrinsically disordered Notch2-binding receptor 1.